Here is a 474-residue protein sequence, read N- to C-terminus: UDP-N-acetylmuramate--L-alanine ligase (474 aa).

108-114 (GTHGKTT) lines the ATP pocket.

Belongs to the MurCDEF family.

It localises to the cytoplasm. It carries out the reaction UDP-N-acetyl-alpha-D-muramate + L-alanine + ATP = UDP-N-acetyl-alpha-D-muramoyl-L-alanine + ADP + phosphate + H(+). The protein operates within cell wall biogenesis; peptidoglycan biosynthesis. In terms of biological role, cell wall formation. This chain is UDP-N-acetylmuramate--L-alanine ligase, found in Chloroflexus aggregans (strain MD-66 / DSM 9485).